Reading from the N-terminus, the 80-residue chain is RNA-binding protein Hfq (80 aa).

The Sm domain maps to 10–70; sequence DLFLNTVRKQ…ISTIMPGQPM (61 aa).

Belongs to the Hfq family. As to quaternary structure, homohexamer.

RNA chaperone that binds small regulatory RNA (sRNAs) and mRNAs to facilitate mRNA translational regulation in response to envelope stress, environmental stress and changes in metabolite concentrations. Also binds with high specificity to tRNAs. The sequence is that of RNA-binding protein Hfq from Rhizobium rhizogenes (strain K84 / ATCC BAA-868) (Agrobacterium radiobacter).